We begin with the raw amino-acid sequence, 380 residues long: O-antigen polymerase (380 aa).

Helical transmembrane passes span 1–21 (MTYF…RLTP), 27–47 (NIVL…TFNE), 55–75 (ATTL…YILI), 94–114 (YIYW…IILL), 132–152 (SISG…MYLA), 169–189 (FLLA…VYIV), 201–221 (LIYG…LGKF), 229–249 (IISA…AAFN), 282–302 (ILPW…FAPW), 306–326 (LGLY…GIWF), 332–352 (LAVG…FFQE), and 353–373 (HYLL…LLAM).

Its subcellular location is the cell inner membrane. The enzyme catalyses n lipid-linked O-antigen repeat units = a lipid-linked O antigen + (n-1) polyisoprenyl diphosphate.. The protein operates within bacterial outer membrane biogenesis; LPS O-antigen biosynthesis. In terms of biological role, polymerase involved in the biosynthesis of the lipopolysaccharide (LPS). Catalyzes the polymerization of the O-antigen repeat units on the periplasmic face of the inner membrane, leading to the formation of the lipid-linked O-antigen molecule. This Shigella dysenteriae protein is O-antigen polymerase.